The sequence spans 184 residues: uncharacterized protein (184 aa).

This is an uncharacterized protein from Chlamydia pneumoniae (Chlamydophila pneumoniae).